Reading from the N-terminus, the 268-residue chain is Microtubule-associated protein RP/EB family member 1 (268 aa).

An N-acetylalanine modification is found at Ala2. The Calponin-homology (CH) domain maps to 14 to 116 (NLSRHDMLAW…FVQWFKKFFD (103 aa)). Position 66 is an N6-crotonyllysine (Lys66). The residue at position 124 (Tyr124) is a Phosphotyrosine. The interval 124 to 268 (YDPVAARQGQ…GGPQEEQEEY (145 aa)) is interaction with MTUS2/TIP150. A disordered region spans residues 146–191 (LSKPKKPLGSGSAAPQRPIATQRTTAAPKAGPGMVRKNPGMGNGDD). Ser155 carries the post-translational modification Phosphoserine. In terms of domain architecture, EB1 C-terminal spans 185–255 (GMGNGDDEAA…LYATDEGFVI (71 aa)). Residues 206–211 (TVEDLE) form an interaction with APC region. The DCTN1-binding stretch occupies residues 208–268 (EDLEKERDFY…GGPQEEQEEY (61 aa)). Lys220 carries the N6-acetyllysine modification. Residues 220 to 242 (KLRNIELICQENEGENDPVLQRI) are APC-binding. An interaction with SKA1 region spans residues 232-255 (EGENDPVLQRIVDILYATDEGFVI).

This sequence belongs to the MAPRE family. As to quaternary structure, homodimer. Heterodimer with MAPRE3. Interacts with DCTN1, DCTN2, TERF1 and dynein intermediate chain. Interaction with DIAPH1 and DIAPH2. Interacts (via C-terminal residues 206-211) with APC (via C-terminal residues 2674-2845); the interaction inhibits association with and bundling of F-actin. Interacts with CLASP2, DST, KIF2C and STIM1; probably required for their targeting to the growing microtubule plus ends. Interacts with MTUS2; interaction is direct and probably targets MTUS2 to microtubules. Interacts (via C-terminus) with SKA1 (via SXIP motif); the interaction is direct and stabilizes the kinetochore-microtubule attachment of the SKA1 complex. Interacts with APC2. Interacts with CLASP1. Interacts with CDK5RAP2. According to another report, MAPRE1 does not interact with CDK5RAP2. Interacts with MACF1. Interacts with RABL2/RABL2A; binds preferentially to GTP-bound RABL2. Interacts with KCNAB2. Interacts (via C-terminus) with CLIP1. Interacts with SLAIN2 and SLAIN1. Interacts with KIF18B; this interaction is required for efficient accumulation of KIF18B at microtubule plus ends. Interacts with MISP. Interacts with KNSTRN. Interacts with NCKAP5L. Interacts with AKAP9. Interacts with PDE4DIP; this interaction, which is PDE4DIP isoform-specific, is required for its recruitment to the Golgi apparatus. Interacts with CAMSAP2. May form a pericentrosomal complex with AKAP9, CDK5RAP2 and PDE4DIP isoform 2/MMG8/SMYLE; within this complex, MAPRE1 binding to CDK5RAP2 may be mediated by PDE4DIP. Contrary to other mammalian species, does not interact with CDK5RAP2, possibly due to the lack of conservation of the MAPRE1-binding motif in rat CDK5RAP2. Interacts with AKNA. Interacts with GAS2L1, GAS2L2, and GAS2L3. Interacts with RARRES1 and AGBL2. Post-translationally, acetylation at Lys-220 by KAT2B/PCAF promotes dynamic kinetochore-microtubule interactions in early mitosis. Crotonylated by KAT5 during mitosis, promoting astral microtubule plasticity and dynamic connection between astral microtubules and the cortex during mitotic chromosome segregation, thereby ensuring accurate spindle positioning in mitosis. Decrotonylated by HDAC3.

It localises to the cytoplasm. The protein localises to the cytoskeleton. It is found in the microtubule organizing center. Its subcellular location is the centrosome. The protein resides in the golgi apparatus. It localises to the spindle. The protein localises to the spindle pole. Plus-end tracking protein (+TIP) that binds to the plus-end of microtubules and regulates the dynamics of the microtubule cytoskeleton. Recruits other +TIP proteins to microtubules by binding to a conserved Ser-X-Leu-Pro (SXLP) motif in their polypeptide chains. Promotes cytoplasmic microtubule nucleation and elongation. Involved in mitotic spindle positioning by stabilizing microtubules and promoting dynamic connection between astral microtubules and the cortex during mitotic chromosome segregation. Assists chromosome alignment in metaphase by recruiting the SKA complex to the spindle and stabilizing its interactions with microtubule bundles (K-fibers). Also acts as a regulator of minus-end microtubule organization: interacts with the complex formed by AKAP9 and PDE4DIP, leading to recruit CAMSAP2 to the Golgi apparatus, thereby tethering non-centrosomal minus-end microtubules to the Golgi, an important step for polarized cell movement. Promotes elongation of CAMSAP2-decorated microtubule stretches on the minus-end of microtubules. Acts as a regulator of autophagosome transport via interaction with CAMSAP2. Functions downstream of Rho GTPases and DIAPH1 in stable microtubule formation. May play a role in cell migration. The protein is Microtubule-associated protein RP/EB family member 1 (Mapre1) of Rattus norvegicus (Rat).